A 267-amino-acid chain; its full sequence is C-type lectin domain family 12 member A (267 aa).

Residues 1-43 (MSEEIVYANLKIQDPDKKEETQKSDKCGGKVSADASHSQQKTV) are Cytoplasmic-facing. An ITIM motif motif is present at residues 5-10 (IVYANL). Phosphotyrosine is present on tyrosine 7. A helical; Signal-anchor for type II membrane protein transmembrane segment spans residues 44 to 64 (LILILLCLLLFIGMGVLGGIF). Topologically, residues 65-267 (YTTLATEMIK…VLNGLPEDSR (203 aa)) are extracellular. N-linked (GlcNAc...) asparagine glycosylation is found at asparagine 98 and asparagine 105. 4 cysteine pairs are disulfide-bonded: cysteine 118-cysteine 130, cysteine 133-cysteine 144, cysteine 161-cysteine 246, and cysteine 225-cysteine 238. Residues 140–247 (YKDSCYSQLN…CTDENNIICE (108 aa)) enclose the C-type lectin domain. N-linked (GlcNAc...) asparagine glycosylation is present at asparagine 165.

In terms of assembly, homodimer; disulfide-linked. Interacts (when the ITIM motif is phosphorylated) with PTPN6 and PTPN11. In terms of processing, phosphorylated at Tyr-7 by SRC in the ITIM motif following ligand-binding, promoting recruitment of tyrosine-protein phosphatases PTPN6 and PTPN11. Mainly expressed in lymphoid tissues. Preferentially expressed in peripheral blood leukocytes; less frequent in thymus, spleen, heart, brain and lung; and undetectable in other tissues.

The protein resides in the cell membrane. Myeloid inhibitory C-type lectin receptor that acts as a negative regulator of myeloid cell activation. Myeloid cell inhibition is required to limit proinflammatory pathways and protect against excessive inflammation. Specifically recognizes and binds various structures, such as neutrophil extracellular traps (NETs) or monosodium urate crystals. Also acts as a pattern-recognition receptor for pathogen-associated molecules, such as plasmodium hemozoin or mycobacterial micolic acid. Ligand-binding induces phosphorylation of its ITIM motif, followed by recruitment of tyrosine-protein phosphatases PTPN6 and PTPN11, which counteract tyrosine-protein kinase SYK, thereby preventing myeloid cell activation. Acts as a pattern-recognition receptor for NETs in neutrophils: specifically recognizes DNA in NETs, leading to inhibit neutrophil activation and limit further NET formation. This regulation is essential for controlling key neutrophil responses and limit NET-mediated inflammatory conditions. Also recognizes dead cells by acting as a receptor for monosodium urate crystals, leading to down-regulate neutrophil activation. Binding to monosodium urate crystals also promotes the type I interferon response. Acts as an inhibitor of natural killer (NK) cell cytotoxicity. Also acts as an ihibitor of dendritic cell maturation in an IL10-dependent manner. In Mus musculus (Mouse), this protein is C-type lectin domain family 12 member A.